Reading from the N-terminus, the 343-residue chain is Ribosomal RNA small subunit methyltransferase C (343 aa).

This sequence belongs to the methyltransferase superfamily. RsmC family. As to quaternary structure, monomer.

It is found in the cytoplasm. The enzyme catalyses guanosine(1207) in 16S rRNA + S-adenosyl-L-methionine = N(2)-methylguanosine(1207) in 16S rRNA + S-adenosyl-L-homocysteine + H(+). Functionally, specifically methylates the guanine in position 1207 of 16S rRNA in the 30S particle. The polypeptide is Ribosomal RNA small subunit methyltransferase C (Escherichia fergusonii (strain ATCC 35469 / DSM 13698 / CCUG 18766 / IAM 14443 / JCM 21226 / LMG 7866 / NBRC 102419 / NCTC 12128 / CDC 0568-73)).